Reading from the N-terminus, the 431-residue chain is Histidine--tRNA ligase (431 aa).

It belongs to the class-II aminoacyl-tRNA synthetase family. Homodimer.

It is found in the cytoplasm. The enzyme catalyses tRNA(His) + L-histidine + ATP = L-histidyl-tRNA(His) + AMP + diphosphate + H(+). This is Histidine--tRNA ligase from Neisseria meningitidis serogroup C (strain 053442).